Consider the following 222-residue polypeptide: Phosphate-specific transport system accessory protein PhoU homolog 1 (222 aa).

This sequence belongs to the PhoU family. As to quaternary structure, homodimer.

It is found in the cytoplasm. Its function is as follows. Plays a role in the regulation of phosphate uptake. In Mycobacterium leprae (strain TN), this protein is Phosphate-specific transport system accessory protein PhoU homolog 1 (phoU1).